The primary structure comprises 530 residues: Ubiquitin carboxyl-terminal hydrolase 17-like protein 13 (530 aa).

The 296-residue stretch at 80–375 (AGLQNMGNTC…QAYVLFYIQK (296 aa)) folds into the USP domain. Cys89 functions as the Nucleophile in the catalytic mechanism. His334 (proton acceptor) is an active-site residue. Basic and acidic residues-rich tracts occupy residues 382–392 (SESVSRGREPR) and 398–412 (DTDRRATQGELKRDH). 2 disordered regions span residues 382–412 (SESVSRGREPRALGAEDTDRRATQGELKRDH) and 477–530 (NHHP…LVCQ). Polar residues predominate over residues 493–505 (TPTHQESMNTGTL). Over residues 510-524 (GRARRSKGKNKHSKR) the composition is skewed to basic residues.

This sequence belongs to the peptidase C19 family. USP17 subfamily.

Its subcellular location is the nucleus. The protein resides in the endoplasmic reticulum. The catalysed reaction is Thiol-dependent hydrolysis of ester, thioester, amide, peptide and isopeptide bonds formed by the C-terminal Gly of ubiquitin (a 76-residue protein attached to proteins as an intracellular targeting signal).. Deubiquitinating enzyme that removes conjugated ubiquitin from specific proteins to regulate different cellular processes that may include cell proliferation, progression through the cell cycle, apoptosis, cell migration, and the cellular response to viral infection. The polypeptide is Ubiquitin carboxyl-terminal hydrolase 17-like protein 13 (USP17L13) (Homo sapiens (Human)).